The chain runs to 167 residues: Lipoprotein signal peptidase (167 aa).

3 consecutive transmembrane segments (helical) span residues 9–29 (AWLY…TKNL), 68–88 (LPLL…YALY), and 98–118 (MGLI…LGMV). Active-site residues include Asp120 and Asp138. The chain crosses the membrane as a helical span at residues 130–150 (YWPAFNIADASISIGIALLIL).

Belongs to the peptidase A8 family.

Its subcellular location is the cell inner membrane. The catalysed reaction is Release of signal peptides from bacterial membrane prolipoproteins. Hydrolyzes -Xaa-Yaa-Zaa-|-(S,diacylglyceryl)Cys-, in which Xaa is hydrophobic (preferably Leu), and Yaa (Ala or Ser) and Zaa (Gly or Ala) have small, neutral side chains.. The protein operates within protein modification; lipoprotein biosynthesis (signal peptide cleavage). Its function is as follows. This protein specifically catalyzes the removal of signal peptides from prolipoproteins. In Aquifex aeolicus (strain VF5), this protein is Lipoprotein signal peptidase.